The following is a 115-amino-acid chain: Replication initiation control protein YabA (115 aa).

Residues His-90, Cys-92, Cys-106, and Cys-109 each contribute to the Zn(2+) site.

This sequence belongs to the YabA family. In terms of assembly, homotetramer. Interacts with both DnaA and DnaN, acting as a bridge between these two proteins. Zn(2+) is required as a cofactor.

Its subcellular location is the cytoplasm. It is found in the nucleoid. Functionally, involved in control of chromosome replication initiation. Inhibits the cooperative binding of DnaA to the oriC region, thus negatively regulating initiation of chromosome replication. Inhibits the ability of DnaA-ATP to form a helix on DNA; does not disassemble preformed DnaA-DNA helices. Decreases the residence time of DnaA on the chromosome at its binding sites (oriC, replication forks and promoter-binding sites). Tethers DnaA to the replication machinery via the DNA polymerase beta sliding clamp subunit (dnaN). Associates with oriC and other DnaA targets on the chromosome in a DnaA-dependent manner. The protein is Replication initiation control protein YabA of Staphylococcus aureus (strain JH1).